The following is a 405-amino-acid chain: Calsequestrin-1 (405 aa).

The first 34 residues, 1–34 (MRATDRMGARAVSELRLALLFVLVLGTPRLGVQG), serve as a signal peptide directing secretion. The residue at position 43 (Tyr-43) is a Phosphotyrosine. Ser-81 carries the phosphoserine modification. Thr-124 bears the Phosphothreonine mark. Ser-216 carries the phosphoserine modification. The N-linked (GlcNAc...) asparagine glycan is linked to Asn-350. Positions 382-405 (EGEINTEDDDDDDDDDDDDDDDDD) are disordered.

This sequence belongs to the calsequestrin family. In terms of assembly, monomer; increases in response to a depletion of intracellular calcium. Homodimer. Homotetramer and homopolymer. Can form linear homooligomers. Ca(2+) ions promote oligomerization. Interacts (via C-terminal end and preferentially with the monomeric form) with STIM1; this interaction increases in response to a depletion of intracellular calcium, decreases both STIM1 aggregation and clustering, interaction of STIM1 with ORAI1 and store-operated Ca(2+) entry (SOCE) activity. Interacts with ASPH and TRDN. Post-translationally, N-glycosylated. As to expression, detected in skeletal muscle (at protein level). Detected in skeletal muscle.

The protein resides in the endoplasmic reticulum. It is found in the sarcoplasmic reticulum. It localises to the sarcoplasmic reticulum lumen. The protein localises to the sarcoplasmic reticulum membrane. Its subcellular location is the mitochondrion matrix. Calsequestrin is a high-capacity, moderate affinity, calcium-binding protein and thus acts as an internal calcium store in muscle. Calcium ions are bound by clusters of acidic residues at the protein surface, often at the interface between subunits. Can bind around 80 Ca(2+) ions. Regulates the release of lumenal Ca(2+) via the calcium release channel RYR1; this plays an important role in triggering muscle contraction. Negatively regulates store-operated Ca(2+) entry (SOCE) activity. The chain is Calsequestrin-1 (Casq1) from Mus musculus (Mouse).